Consider the following 291-residue polypeptide: Acetylglutamate kinase (291 aa).

Residues 64 to 65, Arg86, and Asn190 each bind substrate; that span reads GG.

The protein belongs to the acetylglutamate kinase family. ArgB subfamily.

It is found in the cytoplasm. It carries out the reaction N-acetyl-L-glutamate + ATP = N-acetyl-L-glutamyl 5-phosphate + ADP. Its pathway is amino-acid biosynthesis; L-arginine biosynthesis; N(2)-acetyl-L-ornithine from L-glutamate: step 2/4. Catalyzes the ATP-dependent phosphorylation of N-acetyl-L-glutamate. This Leptospira borgpetersenii serovar Hardjo-bovis (strain L550) protein is Acetylglutamate kinase.